Consider the following 180-residue polypeptide: Dephospho-CoA kinase (180 aa).

The 179-residue stretch at 2-180 (VIGVTGKIGT…VMKLVWEKRE (179 aa)) folds into the DPCK domain. Position 10–15 (10–15 (GTGKST)) interacts with ATP.

It belongs to the CoaE family.

It is found in the cytoplasm. The catalysed reaction is 3'-dephospho-CoA + ATP = ADP + CoA + H(+). Its pathway is cofactor biosynthesis; coenzyme A biosynthesis; CoA from (R)-pantothenate: step 5/5. Functionally, catalyzes the phosphorylation of the 3'-hydroxyl group of dephosphocoenzyme A to form coenzyme A. The chain is Dephospho-CoA kinase from Thermotoga maritima (strain ATCC 43589 / DSM 3109 / JCM 10099 / NBRC 100826 / MSB8).